Here is a 464-residue protein sequence, read N- to C-terminus: Fumarate hydratase class II (464 aa).

Residues 98–100 (SGT), arginine 126, 129–132 (HPND), 139–141 (SSN), and threonine 187 each bind substrate. The active-site Proton donor/acceptor is the histidine 188. The active site involves serine 318. Residues serine 319 and 324–326 (KVN) contribute to the substrate site.

This sequence belongs to the class-II fumarase/aspartase family. Fumarase subfamily. Homotetramer.

It localises to the cytoplasm. It catalyses the reaction (S)-malate = fumarate + H2O. Its pathway is carbohydrate metabolism; tricarboxylic acid cycle; (S)-malate from fumarate: step 1/1. Involved in the TCA cycle. Catalyzes the stereospecific interconversion of fumarate to L-malate. The chain is Fumarate hydratase class II from Photorhabdus laumondii subsp. laumondii (strain DSM 15139 / CIP 105565 / TT01) (Photorhabdus luminescens subsp. laumondii).